The sequence spans 1127 residues: E3 ubiquitin-protein ligase TRIM33 (1127 aa).

Positions 1–18 (MAENKGGGEAESGGGGSG) are enriched in gly residues. The disordered stretch occupies residues 1–118 (MAENKGGGEA…PSAGPPPGPP (118 aa)). The interval 1-147 (MAENKGGGEA…AEPKLLPCLH (147 aa)) is necessary for E3 ubiquitin-protein ligase activity and repression of SMAD4 signaling and transcriptional repression. The span at 19–37 (SAPVTAGAAGPAAQEAEPP) shows a compositional bias: low complexity. Positions 52–64 (RAGAEGGAAGPDD) are enriched in gly residues. Over residues 65 to 97 (GGVAAASSGSAQAASSPAASVGTGVAGGAVSTP) the composition is skewed to low complexity. Positions 98–118 (APAPASAPAPGPSAGPPPGPP) are enriched in pro residues. Residues 125–154 (CAVCQQSLQSRREAEPKLLPCLHSFCLRCL) form an RING-type zinc finger. B box-type zinc fingers lie at residues 212–259 (KSEQ…IRKK) and 271–312 (QRPV…YQFL). Residues Cys217, Cys220, Cys241, His245, Cys276, His279, Cys299, and His304 each coordinate Zn(2+). The interval 299–401 (CQLLEHKEHR…QMKLLQQQND (103 aa)) is necessary for oligomerization. The stretch at 299–401 (CQLLEHKEHR…QMKLLQQQND (103 aa)) forms a coiled coil. Residues Lys329, Lys334, Lys481, and Lys504 each participate in a glycyl lysine isopeptide (Lys-Gly) (interchain with G-Cter in SUMO2) cross-link. Position 515 is an asymmetric dimethylarginine; alternate (Arg515). Arg515 is modified (omega-N-methylarginine; alternate). Residue Lys527 forms a Glycyl lysine isopeptide (Lys-Gly) (interchain with G-Cter in SUMO2) linkage. Residue Arg535 is modified to Omega-N-methylarginine. The disordered stretch occupies residues 536 to 563 (MQQPPAPVPTTTTTTQQHPRQAAPQMLQ). Arg577 carries the post-translational modification Asymmetric dimethylarginine. At Arg591 the chain carries Asymmetric dimethylarginine; alternate. The residue at position 591 (Arg591) is an Omega-N-methylarginine; alternate. Asymmetric dimethylarginine occurs at positions 598 and 604. 3 disordered regions span residues 608–629 (PQYSMMQPHLQRQHSNPGHAGP), 673–692 (NPENLPSLPDIPPIQLEDAG), and 703–818 (YISG…TPPL). Residues 723 to 759 (PSALSPGSSGLSNSHTPVRPPSTSSTGSRGSCGSSGR) show a composition bias toward low complexity. N6-acetyllysine; alternate occurs at positions 763 and 769. Glycyl lysine isopeptide (Lys-Gly) (interchain with G-Cter in SUMO2); alternate cross-links involve residues Lys763 and Lys769. Lys774 participates in a covalent cross-link: Glycyl lysine isopeptide (Lys-Gly) (interchain with G-Cter in SUMO2). Residues Lys776 and Lys793 each participate in a glycyl lysine isopeptide (Lys-Gly) (interchain with G-Cter in SUMO2); alternate cross-link. Residues Lys776 and Lys793 each participate in a glycyl lysine isopeptide (Lys-Gly) (interchain with G-Cter in SUMO1); alternate cross-link. Position 793 is an N6-acetyllysine; alternate (Lys793). Over residues 793 to 802 (KQEKTEDGRR) the composition is skewed to basic and acidic residues. Lys796 participates in a covalent cross-link: Glycyl lysine isopeptide (Lys-Gly) (interchain with G-Cter in SUMO2). A Phosphoserine modification is found at Ser803. Positions 807-818 (LSSPESSLTPPL) are enriched in low complexity. Thr815 carries the phosphothreonine modification. Residue Lys861 forms a Glycyl lysine isopeptide (Lys-Gly) (interchain with G-Cter in SUMO2) linkage. At Ser862 the chain carries Phosphoserine. The PHD-type zinc finger occupies 887 to 934 (EDWCAVCQNGGDLLCCEKCPKVFHLTCHVPTLLSFPSGDWICTFCRDI). Position 951 is an N6-acetyllysine (Lys951). Position 953 is an N6-acetyllysine; alternate (Lys953). Lys953 is covalently cross-linked (Glycyl lysine isopeptide (Lys-Gly) (interchain with G-Cter in SUMO2); alternate). The Bromo domain maps to 957–1080 (GLSPVDQRKC…LYFEDKLTEI (124 aa)). Residues Lys1007 and Lys1043 each participate in a glycyl lysine isopeptide (Lys-Gly) (interchain with G-Cter in SUMO2) cross-link. Thr1051 carries the post-translational modification Phosphothreonine. A Glycyl lysine isopeptide (Lys-Gly) (interchain with G-Cter in SUMO2) cross-link involves residue Lys1057. Positions 1088-1127 (PLPEFEQEEDDGEVTEDSDEDFIQPRRKRLKSDERPVHIK) are disordered. The span at 1092–1109 (FEQEEDDGEVTEDSDEDF) shows a compositional bias: acidic residues. Residue Thr1102 is modified to Phosphothreonine. Ser1105 bears the Phosphoserine mark. Residue Lys1118 forms a Glycyl lysine isopeptide (Lys-Gly) (interchain with G-Cter in SUMO2) linkage. Residues 1118 to 1127 (KSDERPVHIK) are compositionally biased toward basic and acidic residues. Ser1119 is subject to Phosphoserine.

Belongs to the TRIM/RBCC family. As to quaternary structure, homooligomer and heterooligomer with TRIM24 and TRIM28 family members. Interacts with SMAD4 in unstimulated cells. Found in a complex with SMAD2 and SMAD3 upon addition of TGF-beta. Interacts with SMAD2 and SMAD3. Interacts with SMAD4 under basal and induced conditions and, upon TGF-beta signaling, with activated SMAD2. Forms a ternary complex with SMAD4 and SMAD2 upon TGF-beta signaling. Sumoylated with SUMO1. In terms of tissue distribution, expressed in stem cells at the bottom of the crypts of the colon (at protein level). Expressed in colon adenomas and adenocarcinomas (at protein level). Expressed in brain, lung, liver, spleen, thymus, prostate, kidney, testis, heart, placenta, pancreas, small intestine, ovary, colon, skeletal muscle and hematopoietic progenitors.

Its subcellular location is the nucleus. It catalyses the reaction S-ubiquitinyl-[E2 ubiquitin-conjugating enzyme]-L-cysteine + [acceptor protein]-L-lysine = [E2 ubiquitin-conjugating enzyme]-L-cysteine + N(6)-ubiquitinyl-[acceptor protein]-L-lysine.. It participates in protein modification; protein ubiquitination. In terms of biological role, acts as an E3 ubiquitin-protein ligase. Promotes SMAD4 ubiquitination, nuclear exclusion and degradation via the ubiquitin proteasome pathway. According to PubMed:16751102, does not promote a decrease in the level of endogenous SMAD4. May act as a transcriptional repressor. Inhibits the transcriptional response to TGF-beta/BMP signaling cascade. Plays a role in the control of cell proliferation. Its association with SMAD2 and SMAD3 stimulates erythroid differentiation of hematopoietic stem/progenitor. Monoubiquitinates SMAD4 and acts as an inhibitor of SMAD4-dependent TGF-beta/BMP signaling cascade (Monoubiquitination of SMAD4 hampers its ability to form a stable complex with activated SMAD2/3 resulting in inhibition of TGF-beta/BMP signaling cascade). This Homo sapiens (Human) protein is E3 ubiquitin-protein ligase TRIM33 (TRIM33).